The chain runs to 254 residues: Cell division protein FtsQ (254 aa).

Residues 1–27 (MNILKRKTPQNIRFGEQKPKYYFHIRA) lie on the Cytoplasmic side of the membrane. A helical transmembrane segment spans residues 28–48 (FAVLLGVFFLLGVYFNWQSIL). Residues 49–254 (EKMDDKPISA…AGAAVGMVDR (206 aa)) lie on the Periplasmic side of the membrane. The region spanning 54-124 (KPISAFALVG…NRLSIWVSEY (71 aa)) is the POTRA domain.

Belongs to the FtsQ/DivIB family. FtsQ subfamily. In terms of assembly, part of a complex composed of FtsB, FtsL and FtsQ.

The protein resides in the cell inner membrane. Essential cell division protein. May link together the upstream cell division proteins, which are predominantly cytoplasmic, with the downstream cell division proteins, which are predominantly periplasmic. May control correct divisome assembly. In Haemophilus influenzae (strain ATCC 51907 / DSM 11121 / KW20 / Rd), this protein is Cell division protein FtsQ.